We begin with the raw amino-acid sequence, 194 residues long: Imidazoleglycerol-phosphate dehydratase (194 aa).

It belongs to the imidazoleglycerol-phosphate dehydratase family.

It is found in the cytoplasm. It carries out the reaction D-erythro-1-(imidazol-4-yl)glycerol 3-phosphate = 3-(imidazol-4-yl)-2-oxopropyl phosphate + H2O. Its pathway is amino-acid biosynthesis; L-histidine biosynthesis; L-histidine from 5-phospho-alpha-D-ribose 1-diphosphate: step 6/9. The chain is Imidazoleglycerol-phosphate dehydratase from Listeria innocua serovar 6a (strain ATCC BAA-680 / CLIP 11262).